Here is a 173-residue protein sequence, read N- to C-terminus: Crossover junction endodeoxyribonuclease RuvC (173 aa).

Catalysis depends on residues Asp-8, Glu-67, and Asp-139. The Mg(2+) site is built by Asp-8, Glu-67, and Asp-139.

The protein belongs to the RuvC family. As to quaternary structure, homodimer which binds Holliday junction (HJ) DNA. The HJ becomes 2-fold symmetrical on binding to RuvC with unstacked arms; it has a different conformation from HJ DNA in complex with RuvA. In the full resolvosome a probable DNA-RuvA(4)-RuvB(12)-RuvC(2) complex forms which resolves the HJ. Mg(2+) is required as a cofactor.

Its subcellular location is the cytoplasm. It catalyses the reaction Endonucleolytic cleavage at a junction such as a reciprocal single-stranded crossover between two homologous DNA duplexes (Holliday junction).. Its function is as follows. The RuvA-RuvB-RuvC complex processes Holliday junction (HJ) DNA during genetic recombination and DNA repair. Endonuclease that resolves HJ intermediates. Cleaves cruciform DNA by making single-stranded nicks across the HJ at symmetrical positions within the homologous arms, yielding a 5'-phosphate and a 3'-hydroxyl group; requires a central core of homology in the junction. The consensus cleavage sequence is 5'-(A/T)TT(C/G)-3'. Cleavage occurs on the 3'-side of the TT dinucleotide at the point of strand exchange. HJ branch migration catalyzed by RuvA-RuvB allows RuvC to scan DNA until it finds its consensus sequence, where it cleaves and resolves the cruciform DNA. The polypeptide is Crossover junction endodeoxyribonuclease RuvC (Sodalis glossinidius (strain morsitans)).